The following is a 346-amino-acid chain: UPF0283 membrane protein VIBHAR_01918 (346 aa).

Residues methionine 1 to serine 17 are compositionally biased toward basic and acidic residues. Residues methionine 1–threonine 28 form a disordered region. 2 consecutive transmembrane segments (helical) span residues leucine 73–isoleucine 93 and tryptophan 98–leucine 118.

It belongs to the UPF0283 family.

It is found in the cell inner membrane. The sequence is that of UPF0283 membrane protein VIBHAR_01918 from Vibrio campbellii (strain ATCC BAA-1116).